The primary structure comprises 177 residues: Large ribosomal subunit protein uL6 (177 aa).

The protein belongs to the universal ribosomal protein uL6 family. In terms of assembly, part of the 50S ribosomal subunit.

Its function is as follows. This protein binds to the 23S rRNA, and is important in its secondary structure. It is located near the subunit interface in the base of the L7/L12 stalk, and near the tRNA binding site of the peptidyltransferase center. The chain is Large ribosomal subunit protein uL6 from Methylocella silvestris (strain DSM 15510 / CIP 108128 / LMG 27833 / NCIMB 13906 / BL2).